Reading from the N-terminus, the 490-residue chain is 3-octaprenyl-4-hydroxybenzoate carboxy-lyase (490 aa).

Residue Asn172 coordinates Mn(2+). Prenylated FMN contacts are provided by residues Ile175–Arg177, Arg189–Leu191, and Arg194–Gly195. Residue Glu238 coordinates Mn(2+). Asp287 serves as the catalytic Proton donor.

The protein belongs to the UbiD family. Homohexamer. It depends on prenylated FMN as a cofactor. Requires Mn(2+) as cofactor.

It localises to the cell membrane. It catalyses the reaction a 4-hydroxy-3-(all-trans-polyprenyl)benzoate + H(+) = a 2-(all-trans-polyprenyl)phenol + CO2. It participates in cofactor biosynthesis; ubiquinone biosynthesis. Functionally, catalyzes the decarboxylation of 3-octaprenyl-4-hydroxy benzoate to 2-octaprenylphenol, an intermediate step in ubiquinone biosynthesis. This is 3-octaprenyl-4-hydroxybenzoate carboxy-lyase from Idiomarina loihiensis (strain ATCC BAA-735 / DSM 15497 / L2-TR).